Reading from the N-terminus, the 52-residue chain is Transmembrane protein ORF52 (52 aa).

2 helical membrane-spanning segments follow: residues 11-31 (AFLGVLNALAPIIEGATEIIT) and 32-52 (FMALTYVMTMVIARILGGLFV).

It is found in the host membrane. This is Transmembrane protein ORF52 from Acidianus filamentous virus 1 (isolate United States/Yellowstone) (AFV-1).